The chain runs to 430 residues: MIQIVTVRSGDSVYSLASKYGSTPDEIVKDNGLNPAETLVVGQALIVNTKGNNYYVQPGDSLYRISQTYNVPLASLAKVNNLSLKSILHVGQQLYIPKGTKRAVESIAYLQPSTIPIKESLVNATRAINPFLTYLAYFSFEAKRDGTLKEPTETAKIANIATQGNTIPMLVITNIENGNFSADLTSVILRDATIQNKFITNILQTAEKYGMRDIHFDFESVAPEDREAYNRFLRNVKTRLPSGYTLSTTLVPKTSSNQKGKFFETHDYKAQGQIVDFVVIMTYDWGWQGGPPMAISPIGPVKEVLQYAKSQMPPQKIMMGQNLYGFDWKLPFKEGNPPAKAISSVAAVALARKYNVPIRYDFTAQAPHFNYFDENGVQHEVWFEDSRSVQSKFNLMKEQGIGGISYWKIGLPFPQNWRLLVENFTITKKG.

LysM domains follow at residues 3-47 (QIVT…ALIV) and 52-96 (NNYY…QLYI). In terms of domain architecture, GH18 spans 104 to 430 (VESIAYLQPS…VENFTITKKG (327 aa)). Residue Glu219 is the Proton donor of the active site.

This sequence belongs to the glycosyl hydrolase 18 family. Chitinase class II subfamily.

The protein resides in the forespore. N-acetylglucosaminidase involved in cortex peptidoglycan degradation during germination. Cleaves only partially degraded spore peptidoglycans. Recognizes muramic acid delta-lactam residues specific to spore peptidoglycans. This chain is Cortical fragment-lytic enzyme, found in Bacillus anthracis.